A 109-amino-acid polypeptide reads, in one-letter code: Large ribosomal subunit protein uL24 (109 aa).

Residues 1–24 (MANVTTDIKRNDTVAVTSGKDKGK) form a disordered region.

The protein belongs to the universal ribosomal protein uL24 family. Part of the 50S ribosomal subunit.

One of two assembly initiator proteins, it binds directly to the 5'-end of the 23S rRNA, where it nucleates assembly of the 50S subunit. Its function is as follows. One of the proteins that surrounds the polypeptide exit tunnel on the outside of the subunit. The chain is Large ribosomal subunit protein uL24 from Koribacter versatilis (strain Ellin345).